The chain runs to 354 residues: Probable tartrate dehydrogenase/decarboxylase (354 aa).

Asp221, Asp245, and Asp249 together coordinate Mn(2+).

This sequence belongs to the isocitrate and isopropylmalate dehydrogenases family. Mg(2+) is required as a cofactor. The cofactor is Mn(2+). Requires K(+) as cofactor.

The catalysed reaction is tartrate + NAD(+) = 2-hydroxy-3-oxosuccinate + NADH + H(+). It carries out the reaction (2R,3S)-tartrate + NAD(+) = 2-hydroxy-3-oxosuccinate + NADH + H(+). It catalyses the reaction (2R,3R)-tartrate + NAD(+) = 2-hydroxy-3-oxosuccinate + NADH + H(+). The enzyme catalyses (2R,3R)-tartrate + H(+) = (R)-glycerate + CO2. The catalysed reaction is (R)-malate + NAD(+) = pyruvate + CO2 + NADH. In terms of biological role, has multiple catalytic activities. Apart from catalyzing the oxidation of (+)-tartrate to oxaloglycolate, also converts meso-tartrate to D-glycerate and catalyzes the oxidative decarboxylation of D-malate to pyruvate. This chain is Probable tartrate dehydrogenase/decarboxylase (ycsA), found in Bacillus subtilis (strain 168).